The primary structure comprises 473 residues: Photosystem II CP43 reaction center protein (473 aa).

A propeptide spanning residues 1–14 (MKTLYSLRRFYPVE) is cleaved from the precursor. Thr15 is modified (N-acetylthreonine). Thr15 is modified (phosphothreonine). A run of 5 helical transmembrane segments spans residues 69–93 (LFEVAHFVPEKPMYEQGLILLPHLA), 134–155 (LLGPETLEESFPFFGYVWKDRN), 178–200 (KALYFGGVYDTWAPGGGDVRKIT), 255–275 (KPFAWARRAFVWSGEAYLSYS), and 291–312 (WFNNTAYPSEFYGPTGPEASQA). Residue Glu367 coordinates [CaMn4O5] cluster. Residues 447–471 (RARAAAAGFEKGIDRDFEPVLSMTP) form a helical membrane-spanning segment.

Belongs to the PsbB/PsbC family. PsbC subfamily. In terms of assembly, PSII is composed of 1 copy each of membrane proteins PsbA, PsbB, PsbC, PsbD, PsbE, PsbF, PsbH, PsbI, PsbJ, PsbK, PsbL, PsbM, PsbT, PsbX, PsbY, PsbZ, Psb30/Ycf12, at least 3 peripheral proteins of the oxygen-evolving complex and a large number of cofactors. It forms dimeric complexes. The cofactor is Binds multiple chlorophylls and provides some of the ligands for the Ca-4Mn-5O cluster of the oxygen-evolving complex. It may also provide a ligand for a Cl- that is required for oxygen evolution. PSII binds additional chlorophylls, carotenoids and specific lipids..

The protein resides in the plastid. Its subcellular location is the chloroplast thylakoid membrane. One of the components of the core complex of photosystem II (PSII). It binds chlorophyll and helps catalyze the primary light-induced photochemical processes of PSII. PSII is a light-driven water:plastoquinone oxidoreductase, using light energy to abstract electrons from H(2)O, generating O(2) and a proton gradient subsequently used for ATP formation. The sequence is that of Photosystem II CP43 reaction center protein from Drimys granadensis.